The chain runs to 251 residues: Chlorophyll a-b binding protein 4, chloroplastic (251 aa).

Ser-35 carries the post-translational modification Phosphoserine. Trp-57 is a chlorophyll b binding site. Residues Phe-77 and Glu-96 each contribute to the chlorophyll a site. Arg-101 provides a ligand contact to chlorophyll b. A run of 2 helical transmembrane segments spans residues 102–122 and 135–155; these read WAMLGVAGMLLPEVFTKIGII and YFASSSTLFVIEFILFHYVEI. Positions 138, 144, 154, and 157 each coordinate chlorophyll b. Residues Lys-204, Glu-205, Asn-208, Arg-210, Gln-222, and His-237 each contribute to the chlorophyll a site.

It belongs to the light-harvesting chlorophyll a/b-binding (LHC) protein family. In terms of assembly, the LHC complex consists of chlorophyll a-b binding proteins. Red-emitting heterodimer with LHCA1. Binds at least 14 chlorophylls (8 Chl-a and 6 Chl-b) and carotenoids such as lutein and neoxanthin. is required as a cofactor. In terms of processing, photoregulated by reversible phosphorylation of its threonine residues.

The protein localises to the plastid. It is found in the chloroplast thylakoid membrane. The light-harvesting complex (LHC) functions as a light receptor, it captures and delivers excitation energy to photosystems with which it is closely associated. The chain is Chlorophyll a-b binding protein 4, chloroplastic from Arabidopsis thaliana (Mouse-ear cress).